The sequence spans 515 residues: Glucose-6-phosphate 1-dehydrogenase (515 aa).

Residue alanine 2 is modified to N-acetylalanine. Position 8 is a phosphoserine (serine 8). Threonine 10 is modified (phosphothreonine). NADP(+)-binding positions include 38–45 (GASGDLAK) and arginine 72. Lysine 89 is modified (N6-acetyllysine). The NADP(+) site is built by tyrosine 147 and lysine 171. Residues lysine 171, 201–205 (HYLGK), glutamate 239, and aspartate 258 each bind D-glucose 6-phosphate. Lysine 171 is subject to N6-(2-hydroxyisobutyryl)lysine; alternate. Lysine 171 carries the N6-acetyllysine; alternate modification. Histidine 263 acts as the Proton acceptor in catalysis. Arginine 357 serves as a coordination point for NADP(+). Positions 360 and 365 each coordinate D-glucose 6-phosphate. Residues lysine 366, arginine 370, and arginine 393 each coordinate NADP(+). Glutamine 395 contributes to the D-glucose 6-phosphate binding site. NADP(+) contacts are provided by residues 401–403 (YTK) and 421–423 (DLT). Lysine 403 carries the N6-acetyllysine modification. Lysine 432 carries the post-translational modification N6-acetyllysine. NADP(+) is bound at residue arginine 487. Position 497 is an N6-acetyllysine (lysine 497). Positions 503 and 509 each coordinate NADP(+). Tyrosine 503 carries the phosphotyrosine modification.

It belongs to the glucose-6-phosphate dehydrogenase family. As to quaternary structure, homotetramer; dimer of dimers. Interacts with SIRT2; the interaction is enhanced by H(2)O(2) treatment. Forms a ternary complex with ALDOB and TP53; this interaction is direct. ALDOB stabilizes the complex inhibiting G6PD activity and keeping oxidative pentose phosphate metabolism in check. Post-translationally, acetylated by ELP3 at Lys-403; acetylation inhibits its homodimerization and enzyme activity. Deacetylated by SIRT2 at Lys-403; deacetylation stimulates its enzyme activity.

It localises to the cytoplasm. The protein localises to the cytosol. Its subcellular location is the membrane. It catalyses the reaction D-glucose 6-phosphate + NADP(+) = 6-phospho-D-glucono-1,5-lactone + NADPH + H(+). The protein operates within carbohydrate degradation; pentose phosphate pathway; D-ribulose 5-phosphate from D-glucose 6-phosphate (oxidative stage): step 1/3. Its function is as follows. Cytosolic glucose-6-phosphate dehydrogenase that catalyzes the first and rate-limiting step of the oxidative branch within the pentose phosphate pathway/shunt, an alternative route to glycolysis for the dissimilation of carbohydrates and a major source of reducing power and metabolic intermediates for fatty acid and nucleic acid biosynthetic processes. The sequence is that of Glucose-6-phosphate 1-dehydrogenase (G6pdx) from Rattus norvegicus (Rat).